Here is a 527-residue protein sequence, read N- to C-terminus: Type II methyltransferase M.XamI (527 aa).

The protein belongs to the N(4)/N(6)-methyltransferase family.

It catalyses the reaction a 2'-deoxyadenosine in DNA + S-adenosyl-L-methionine = an N(6)-methyl-2'-deoxyadenosine in DNA + S-adenosyl-L-homocysteine + H(+). Functionally, a gamma subtype methylase that recognizes the double-stranded sequence 5'-GTCGAC-3', possibly methylates A-5 on both strands, and protects the DNA from cleavage by the XamI endonuclease. The chain is Type II methyltransferase M.XamI from Xanthomonas campestris pv. amaranthicola.